Here is a 528-residue protein sequence, read N- to C-terminus: Probable serine/threonine-protein kinase 380R (528 aa).

The interval 70–96 is disordered; that stretch reads VKIPKSKSPPKVKSPKRKKSPVRRRVS. The segment covering 73 to 95 has biased composition (basic residues); it reads PKSKSPPKVKSPKRKKSPVRRRV. Positions 156–507 constitute a Protein kinase domain; the sequence is FTNVKAVGKG…LANVLIHKIF (352 aa). ATP-binding positions include 162–170 and Lys187; that span reads VGKGSFGTV. Asp302 serves as the catalytic Proton acceptor.

This sequence belongs to the protein kinase superfamily. Ser/Thr protein kinase family.

It catalyses the reaction L-seryl-[protein] + ATP = O-phospho-L-seryl-[protein] + ADP + H(+). The catalysed reaction is L-threonyl-[protein] + ATP = O-phospho-L-threonyl-[protein] + ADP + H(+). In Invertebrate iridescent virus 6 (IIV-6), this protein is Probable serine/threonine-protein kinase 380R.